Consider the following 518-residue polypeptide: uncharacterized protein (518 aa).

ABC transporter domains follow at residues 4–260 (LSVK…QLEA) and 324–518 (LIFE…TKVL). Residues 36 to 43 (GANGEGKS) and 357 to 364 (GANGIGKT) each bind ATP.

Belongs to the ABC transporter superfamily.

This is an uncharacterized protein from Bacillus subtilis (strain 168).